The chain runs to 124 residues: MTMYATLEEAIDAAREEFLADNPGIDAEDANVQQFNAQKYVLQDGDIMWQVEFFADEGEEGECLPMLSGEAAQSVFDGDYDEIEIRQEWQEENTLHEWDEGEFQLEPPLDTEEGRAAADEWDER.

Residues 96–124 are disordered; the sequence is HEWDEGEFQLEPPLDTEEGRAAADEWDER. Over residues 112 to 124 the composition is skewed to basic and acidic residues; it reads EEGRAAADEWDER.

In terms of biological role, could participate in the normal pathway of protein export. The polypeptide is Acidic protein MsyB (msyB) (Escherichia coli (strain K12)).